Reading from the N-terminus, the 569-residue chain is Urease subunit alpha (569 aa).

Residues 131-569 (GGIDTHIHFI…LPLAQRYLLL (439 aa)) form the Urease domain. Ni(2+) is bound by residues His136, His138, and Lys219. Residue Lys219 is modified to N6-carboxylysine. His221 contributes to the substrate binding site. The Ni(2+) site is built by His248 and His274. Catalysis depends on His322, which acts as the Proton donor. Asp362 contacts Ni(2+).

Belongs to the metallo-dependent hydrolases superfamily. Urease alpha subunit family. As to quaternary structure, heterotrimer of UreA (gamma), UreB (beta) and UreC (alpha) subunits. Three heterotrimers associate to form the active enzyme. Requires Ni cation as cofactor. In terms of processing, carboxylation allows a single lysine to coordinate two nickel ions.

Its subcellular location is the cytoplasm. The enzyme catalyses urea + 2 H2O + H(+) = hydrogencarbonate + 2 NH4(+). The protein operates within nitrogen metabolism; urea degradation; CO(2) and NH(3) from urea (urease route): step 1/1. This chain is Urease subunit alpha, found in Synechococcus sp. (strain WH7805).